The primary structure comprises 845 residues: Translation initiation factor IF-2 (845 aa).

Composition is skewed to basic and acidic residues over residues 139-198 (EAKR…EKPA) and 206-228 (FRSE…KELH). The disordered stretch occupies residues 139 to 253 (EAKRQAAEEE…PQKAAPAAKH (115 aa)). Residues 345–512 (SRAAVVTIMG…AILLQAEVME (168 aa)) form the tr-type G domain. Positions 354–361 (GHVDHGKT) are G1. Position 354–361 (354–361 (GHVDHGKT)) interacts with GTP. Residues 379–383 (GITQH) are G2. Residues 400–403 (DTPG) form a G3 region. Residues 400 to 404 (DTPGH) and 454 to 457 (NKID) each bind GTP. The G4 stretch occupies residues 454-457 (NKID). Residues 490 to 492 (SAK) are G5.

Belongs to the TRAFAC class translation factor GTPase superfamily. Classic translation factor GTPase family. IF-2 subfamily.

The protein localises to the cytoplasm. Functionally, one of the essential components for the initiation of protein synthesis. Protects formylmethionyl-tRNA from spontaneous hydrolysis and promotes its binding to the 30S ribosomal subunits. Also involved in the hydrolysis of GTP during the formation of the 70S ribosomal complex. The protein is Translation initiation factor IF-2 of Nitrosococcus oceani (strain ATCC 19707 / BCRC 17464 / JCM 30415 / NCIMB 11848 / C-107).